The primary structure comprises 205 residues: Probable NAD(P)H dehydrogenase (quinone) FQR1-like 1 (205 aa).

The 188-residue stretch at 5 to 192 (VYIVYYSMYG…GQAFHQGKYI (188 aa)) folds into the Flavodoxin-like domain. Residues 11 to 15 (SMYGH), 112 to 165 (IFYS…SPYG), and His136 each bind FMN. Residue Tyr13 participates in NAD(+) binding.

Belongs to the WrbA family. FMN serves as cofactor.

It is found in the cell membrane. It catalyses the reaction a quinone + NADH + H(+) = a quinol + NAD(+). It carries out the reaction a quinone + NADPH + H(+) = a quinol + NADP(+). Its function is as follows. Catalyzes the transfer of electrons from NADH and NADPH to reduce quinone to the hydroquinone state. The protein is Probable NAD(P)H dehydrogenase (quinone) FQR1-like 1 of Arabidopsis thaliana (Mouse-ear cress).